The sequence spans 29 residues: Bacteriocin (29 aa).

The protein resides in the secreted. Its function is as follows. Has antibacterial activity against strains of L.monocytogenes, L.lactis, B.subtilis, S.typhi, S.aureus, C.perfringens, E.aerogenes and M.luteus but not against E.coli, S.sonnei, S.pneumoniae, S.faecalis, P.aeruginosa, K.pneumoniae or P.vulgaris. The sequence is that of Bacteriocin from Lactococcus lactis subsp. lactis (Streptococcus lactis).